The chain runs to 154 residues: Ribosomal RNA large subunit methyltransferase H (154 aa).

S-adenosyl-L-methionine-binding positions include leucine 70, glycine 102, and 121–126 (LSRLTF).

Belongs to the RNA methyltransferase RlmH family. As to quaternary structure, homodimer.

Its subcellular location is the cytoplasm. The enzyme catalyses pseudouridine(1915) in 23S rRNA + S-adenosyl-L-methionine = N(3)-methylpseudouridine(1915) in 23S rRNA + S-adenosyl-L-homocysteine + H(+). Its function is as follows. Specifically methylates the pseudouridine at position 1915 (m3Psi1915) in 23S rRNA. This chain is Ribosomal RNA large subunit methyltransferase H, found in Geobacter metallireducens (strain ATCC 53774 / DSM 7210 / GS-15).